Here is a 104-residue protein sequence, read N- to C-terminus: Circadian clock oscillator protein KaiB (104 aa).

This sequence belongs to the KaiB family. As to quaternary structure, the KaiABC complex composition changes during the circadian cycle to control KaiC phosphorylation. Complexes KaiC(6), KaiA(2-4):KaiC(6), KaiB(6):KaiC(6) and KaiC(6):KaiB(6):KaiA(12) are among the most important forms, many form cooperatively. Undergoes a major conformational rearrangment; in the free state forms homotetramers as a dimer of dimers. When bound to the CI domain of KaiC switches to a monomeric thioredoxin-fold (KaiB(fs)). KaiB(fs) binds CikA, leading it to dephosphorylate phospho-RpaA.

Its function is as follows. Key component of the KaiABC oscillator complex, which constitutes the main circadian regulator in cyanobacteria. Complex composition changes during the circadian cycle to control KaiC phosphorylation. KaiA stimulates KaiC autophosphorylation, while KaiB sequesters KaiA, leading to KaiC autodephosphorylation. Phospho-Ser-431 KaiC accumulation triggers binding of KaiB to form the KaiB(6):KaiC(6) complex, leading to changes in output regulators CikA and SasA. KaiB switches to a thioredoxin-like fold (KaiB(fs)) when bound to KaiC. KaiB(6):KaiC(6) formation exposes a site for KaiA binding that sequesters KaiA from KaiC, making the KaiC(6):KaiB(6):KaiA(12) complex that results in KaiC autodephosphorylation. Functionally, a metamorphic protein which reversibly switches between an inactive tetrameric fold and a rare, thioredoxin-like monomeric fold (KaiB(fs)). KaiB(fs) binds phospho-KaiC, KaiA and CikA. KaiA and CikA compete for binding to KaiB(fs), and KaiB(fs) and SasA compete for binding to KaiC, thus the clock oscillator and output signal pathway are tightly coupled. The protein is Circadian clock oscillator protein KaiB of Microcystis aeruginosa (strain NIES-843 / IAM M-2473).